Reading from the N-terminus, the 1057-residue chain is Adenylate-forming reductase stbB (1057 aa).

Positions 21–378 (STKRQPGAVC…FRLRTDMNFE (358 aa)) are adenylation (A) domain. AMP is bound by residues histidine 251, 344 to 345 (NF), threonine 349, and 423 to 426 (AVGR). The 88-residue stretch at 564-651 (ETLEEDIKAL…QMAAAIKNPS (88 aa)) folds into the Carrier domain. O-(pantetheine 4'-phosphoryl)serine is present on serine 600. The tract at residues 693-1025 (IVVVTGSSGS…SGAVILGTDV (333 aa)) is reductase (R) domain. NADP(+) is bound by residues 700–703 (SGSL), 783–785 (AAW), tyrosine 858, and lysine 862.

The protein belongs to the adenylate-forming reductase family.

It carries out the reaction ilicicolinate B + AH2 + ATP = ilicicolin B + A + AMP + diphosphate. The protein operates within secondary metabolite biosynthesis; terpenoid biosynthesis. Its function is as follows. Nonribosomal peptide synthase-like protein; part of the cluster that mediates the biosynthesis of LL-Z1272-beta, also known as ilicicolin B, a prenylated aryl-aldehyde produced by several fungi and that serves as a key pathway intermediate for many fungal meroterpenoids. The first step in the pathway is performed by the non-reducing polyketide synthase stbA that produces orsellinic acid by condensing acetyl-CoA with 3 malonyl-CoA units. The prenyltransferase stbC then prenylates orsenilic acid into grifolic acid. Finally, grifolic acid is reduced to ilicicolin B by the NRPS-like protein stbB. This chain is Adenylate-forming reductase stbB, found in Stachybotrys bisbyi (Hyalostachybotrys bisbyi).